We begin with the raw amino-acid sequence, 133 residues long: Holo-[acyl-carrier-protein] synthase (133 aa).

2 residues coordinate Mg(2+): Asp8 and Glu64.

It belongs to the P-Pant transferase superfamily. AcpS family. The cofactor is Mg(2+).

It is found in the cytoplasm. It catalyses the reaction apo-[ACP] + CoA = holo-[ACP] + adenosine 3',5'-bisphosphate + H(+). Its function is as follows. Transfers the 4'-phosphopantetheine moiety from coenzyme A to a Ser of acyl-carrier-protein. This is Holo-[acyl-carrier-protein] synthase from Shewanella loihica (strain ATCC BAA-1088 / PV-4).